A 956-amino-acid polypeptide reads, in one-letter code: Translation initiation factor IF-2 (956 aa).

Positions phenylalanine 50–proline 351 are disordered. The span at alanine 64 to alanine 95 shows a compositional bias: pro residues. 2 stretches are compositionally biased toward low complexity: residues proline 96–alanine 107 and proline 121–alanine 136. The span at alanine 146–threonine 155 shows a compositional bias: basic and acidic residues. Gly residues-rich tracts occupy residues arginine 171–arginine 192 and arginine 206–glycine 234. Low complexity predominate over residues serine 235–proline 254. Over residues alanine 255–glycine 320 the composition is skewed to gly residues. Residues valine 324–lysine 333 are compositionally biased toward basic residues. A tr-type G domain is found at alanine 448–leucine 619. Residues glycine 457–threonine 464 are G1. Glycine 457 to threonine 464 is a binding site for GTP. The segment at glycine 482 to histidine 486 is G2. The tract at residues aspartate 507 to glycine 510 is G3. Residues aspartate 507 to histidine 511 and asparagine 561 to aspartate 564 each bind GTP. Residues asparagine 561–aspartate 564 are G4. The G5 stretch occupies residues serine 597–lysine 599.

It belongs to the TRAFAC class translation factor GTPase superfamily. Classic translation factor GTPase family. IF-2 subfamily.

It localises to the cytoplasm. In terms of biological role, one of the essential components for the initiation of protein synthesis. Protects formylmethionyl-tRNA from spontaneous hydrolysis and promotes its binding to the 30S ribosomal subunits. Also involved in the hydrolysis of GTP during the formation of the 70S ribosomal complex. This Beutenbergia cavernae (strain ATCC BAA-8 / DSM 12333 / CCUG 43141 / JCM 11478 / NBRC 16432 / NCIMB 13614 / HKI 0122) protein is Translation initiation factor IF-2.